Consider the following 160-residue polypeptide: Outer membrane protein MT2024.1 (160 aa).

An N-terminal signal peptide occupies residues 1–22 (MSWSRVIAYGLLPGLALALTCG).

It localises to the cell outer membrane. This Mycobacterium tuberculosis (strain CDC 1551 / Oshkosh) protein is Outer membrane protein MT2024.1.